Here is a 380-residue protein sequence, read N- to C-terminus: Chaperone protein DnaJ (380 aa).

Residues 1–48 (MAKKDYYDTLGVPKNASDDDIKKAYRKLAMKHHPDRNQGDKSKVSEEK) are disordered. The region spanning 5 to 72 (DYYDTLGVPK…NKRMAYDQYG (68 aa)) is the J domain. Basic residues predominate over residues 24–34 (AYRKLAMKHHP). The segment covering 35–48 (DRNQGDKSKVSEEK) has biased composition (basic and acidic residues). A CR-type zinc finger spans residues 139–217 (GKEAQIRIPS…CHGVGKTKNN (79 aa)). Zn(2+)-binding residues include C152, C155, C169, C172, C191, C194, C205, and C208. CXXCXGXG motif repeat units follow at residues 152 to 159 (CNTCHGSG), 169 to 176 (CTTCHGHG), 191 to 198 (CPQCKGTG), and 205 to 212 (CVACHGVG). A disordered region spans residues 357-380 (KKGGARHSPSEEGWADKLKSFFSA). The span at 364-380 (SPSEEGWADKLKSFFSA) shows a compositional bias: basic and acidic residues.

Belongs to the DnaJ family. As to quaternary structure, homodimer. Zn(2+) serves as cofactor.

It localises to the cytoplasm. In terms of biological role, participates actively in the response to hyperosmotic and heat shock by preventing the aggregation of stress-denatured proteins and by disaggregating proteins, also in an autonomous, DnaK-independent fashion. Unfolded proteins bind initially to DnaJ; upon interaction with the DnaJ-bound protein, DnaK hydrolyzes its bound ATP, resulting in the formation of a stable complex. GrpE releases ADP from DnaK; ATP binding to DnaK triggers the release of the substrate protein, thus completing the reaction cycle. Several rounds of ATP-dependent interactions between DnaJ, DnaK and GrpE are required for fully efficient folding. Also involved, together with DnaK and GrpE, in the DNA replication of plasmids through activation of initiation proteins. The polypeptide is Chaperone protein DnaJ (Polaromonas sp. (strain JS666 / ATCC BAA-500)).